Here is a 286-residue protein sequence, read N- to C-terminus: UDP-3-O-acyl-N-acetylglucosamine deacetylase (286 aa).

Positions 79, 237, and 241 each coordinate Zn(2+). The active-site Proton donor is the His264.

This sequence belongs to the LpxC family. Zn(2+) is required as a cofactor.

The catalysed reaction is a UDP-3-O-[(3R)-3-hydroxyacyl]-N-acetyl-alpha-D-glucosamine + H2O = a UDP-3-O-[(3R)-3-hydroxyacyl]-alpha-D-glucosamine + acetate. Its pathway is glycolipid biosynthesis; lipid IV(A) biosynthesis; lipid IV(A) from (3R)-3-hydroxytetradecanoyl-[acyl-carrier-protein] and UDP-N-acetyl-alpha-D-glucosamine: step 2/6. Functionally, catalyzes the hydrolysis of UDP-3-O-myristoyl-N-acetylglucosamine to form UDP-3-O-myristoylglucosamine and acetate, the committed step in lipid A biosynthesis. This Chlamydia trachomatis serovar A (strain ATCC VR-571B / DSM 19440 / HAR-13) protein is UDP-3-O-acyl-N-acetylglucosamine deacetylase.